The chain runs to 412 residues: FAD-dependent monooxygenase nscC (412 aa).

The N-terminal stretch at 1–21 (MGKPQETILIIGAGIAGLTAS) is a signal peptide. Residues Glu35 and Ala46 each contribute to the FAD site. Residues Asn68 and Asn92 are each glycosylated (N-linked (GlcNAc...) asparagine). Arg119 provides a ligand contact to FAD. Asn170, Asn231, and Asn251 each carry an N-linked (GlcNAc...) asparagine glycan. Asp326 and Gly339 together coordinate FAD.

The protein belongs to the paxM FAD-dependent monooxygenase family. The cofactor is FAD.

Its pathway is secondary metabolite biosynthesis. FAD-dependent monooxygenase; part of the gene cluster that mediates the biosynthesis of neosartoricin B, a prenylated anthracenone that probably exhibits T-cell antiproliferative activity, suggestive of a physiological role as an immunosuppressive agent. The non-reducing polyketide synthase nscA probably synthesizes and cyclizes the decaketide backbone. The hydrolase nscB then mediates the product release through hydrolysis followed by spontaneous decarboxylation. The prenyltransferase nscD catalyzes the addition of the dimethylallyl group to the aromatic C5. The FAD-dependent monooxygenase nscC is then responsible for the stereospecific hydroxylation at C2. Neosartoricin B can be converted into two additional compounds neosartoricins C and D. Neosartoricin C is a spirocyclic compound that is cyclized through the attack of C3 hydroxyl on C14, followed by dehydration. On the other hand, neosartoricin D is a further cyclized compound in which attack of C2 on C14 in neosartoricin C results in the formation of the acetal-containing dioxabicyclo-octanone ring. Both of these compounds are novel and possibly represent related metabolites of the gene cluster. The polypeptide is FAD-dependent monooxygenase nscC (Trichophyton rubrum (strain ATCC MYA-4607 / CBS 118892) (Athlete's foot fungus)).